The sequence spans 282 residues: MIYIGLTGWGDHDSIYPPKTASQKKLQAYSSHFPIVELDASFYAIQPARNNEKWVKETPETFQFIVKAYQGMTGHQRGEIPFDSKEEMFDAFKVSLTPYLHSNKLAMVLFQFPPWFDCKKENVAYLRWCKHQMGDIPCALEFRNRSWFSPPFYEQTLSFMKAEGWIHSVCDEPQIGEGSVPTVLRATDENKTLVRFHGRNKQGWMKPDGGKNWREVRYLYRYNQQELEDWKKHLNELQQQCKDVFVLFNNNSGGDAADNGKQMLELLDIEYSGLAPRQLDLF.

Belongs to the UPF0759 family.

This is UPF0759 protein YunF (yunF) from Bacillus subtilis (strain 168).